The sequence spans 85 residues: Makatoxin-3 (85 aa).

The first 19 residues, 1–19 (MNYLIVISFALLLMTGVES), serve as a signal peptide directing secretion. The region spanning 21-83 (RDAYIAKKEN…VPIRIPGPCI (63 aa)) is the LCN-type CS-alpha/beta domain. Intrachain disulfides connect Cys31-Cys82, Cys35-Cys55, Cys41-Cys65, and Cys45-Cys67.

It belongs to the long (4 C-C) scorpion toxin superfamily. Sodium channel inhibitor family. Alpha subfamily. As to expression, expressed by the venom gland.

Its subcellular location is the secreted. Its function is as follows. This protein markedly relaxes the rat carbachol-precontracted anococcygeus muscle. This relaxation is inhibited by the inhibitor of nitric oxide (NO) synthase, N-nitro-L-arginine methyl ester (L-NAME), suggesting that the response induced by this protein is NO-mediated. The sequence is that of Makatoxin-3 from Olivierus martensii (Manchurian scorpion).